Consider the following 456-residue polypeptide: CBL-interacting protein kinase 9 (456 aa).

The Protein kinase domain maps to 27–282 (YELGKTIGEG…IAQILEDDWF (256 aa)). Residues 33 to 41 (IGEGSFAKV) and Lys-56 contribute to the ATP site. Asp-150 functions as the Proton acceptor in the catalytic mechanism. An activation loop region spans residues 168 to 197 (DFGLSAFAPQTKEDGLLHTACGTPNYVAPE). The region spanning 318–343 (REKPESMNAFALISRSQGFNLGNLFE) is the NAF domain. A PPI region spans residues 351-380 (KRETSFTSQCTPQEIMSKIEEACGPLGFNV).

It belongs to the protein kinase superfamily. CAMK Ser/Thr protein kinase family. SNF1 subfamily. Requires Mn(2+) as cofactor.

The catalysed reaction is L-seryl-[protein] + ATP = O-phospho-L-seryl-[protein] + ADP + H(+). It catalyses the reaction L-threonyl-[protein] + ATP = O-phospho-L-threonyl-[protein] + ADP + H(+). In terms of biological role, CIPK serine-threonine protein kinases interact with CBL proteins. Binding of a CBL protein to the regulatory NAF domain of CIPK protein lead to the activation of the kinase in a calcium-dependent manner. The sequence is that of CBL-interacting protein kinase 9 (CIPK9) from Oryza sativa subsp. japonica (Rice).